Reading from the N-terminus, the 256-residue chain is Type III pantothenate kinase (256 aa).

Residue 6 to 13 (DIGNSSIV) coordinates ATP. Residues tyrosine 101 and 108-111 (GADR) each bind substrate. The Proton acceptor role is filled by aspartate 110. A K(+)-binding site is contributed by aspartate 130. Residue threonine 133 coordinates ATP. Threonine 185 contributes to the substrate binding site.

It belongs to the type III pantothenate kinase family. In terms of assembly, homodimer. NH4(+) is required as a cofactor. The cofactor is K(+).

It is found in the cytoplasm. It carries out the reaction (R)-pantothenate + ATP = (R)-4'-phosphopantothenate + ADP + H(+). Its pathway is cofactor biosynthesis; coenzyme A biosynthesis; CoA from (R)-pantothenate: step 1/5. Its function is as follows. Catalyzes the phosphorylation of pantothenate (Pan), the first step in CoA biosynthesis. This Shouchella clausii (strain KSM-K16) (Alkalihalobacillus clausii) protein is Type III pantothenate kinase.